Consider the following 557-residue polypeptide: Dihydroxy-acid dehydratase (557 aa).

Cysteine 50 serves as a coordination point for [2Fe-2S] cluster. Aspartate 82 contributes to the Mg(2+) binding site. Cysteine 123 contributes to the [2Fe-2S] cluster binding site. Mg(2+)-binding residues include aspartate 124 and lysine 125. Lysine 125 carries the N6-carboxylysine modification. Cysteine 195 serves as a coordination point for [2Fe-2S] cluster. Glutamate 447 provides a ligand contact to Mg(2+). Serine 473 functions as the Proton acceptor in the catalytic mechanism.

The protein belongs to the IlvD/Edd family. As to quaternary structure, homodimer. [2Fe-2S] cluster is required as a cofactor. Requires Mg(2+) as cofactor.

The enzyme catalyses (2R)-2,3-dihydroxy-3-methylbutanoate = 3-methyl-2-oxobutanoate + H2O. It carries out the reaction (2R,3R)-2,3-dihydroxy-3-methylpentanoate = (S)-3-methyl-2-oxopentanoate + H2O. It functions in the pathway amino-acid biosynthesis; L-isoleucine biosynthesis; L-isoleucine from 2-oxobutanoate: step 3/4. It participates in amino-acid biosynthesis; L-valine biosynthesis; L-valine from pyruvate: step 3/4. Functionally, functions in the biosynthesis of branched-chain amino acids. Catalyzes the dehydration of (2R,3R)-2,3-dihydroxy-3-methylpentanoate (2,3-dihydroxy-3-methylvalerate) into 2-oxo-3-methylpentanoate (2-oxo-3-methylvalerate) and of (2R)-2,3-dihydroxy-3-methylbutanoate (2,3-dihydroxyisovalerate) into 2-oxo-3-methylbutanoate (2-oxoisovalerate), the penultimate precursor to L-isoleucine and L-valine, respectively. This Metallosphaera sedula (strain ATCC 51363 / DSM 5348 / JCM 9185 / NBRC 15509 / TH2) protein is Dihydroxy-acid dehydratase.